Here is a 361-residue protein sequence, read N- to C-terminus: Peptide chain release factor 1 (361 aa).

Gln235 carries the N5-methylglutamine modification.

The protein belongs to the prokaryotic/mitochondrial release factor family. Methylated by PrmC. Methylation increases the termination efficiency of RF1.

It localises to the cytoplasm. Peptide chain release factor 1 directs the termination of translation in response to the peptide chain termination codons UAG and UAA. In Xanthomonas oryzae pv. oryzae (strain MAFF 311018), this protein is Peptide chain release factor 1.